The following is a 555-amino-acid chain: Beta-hexosaminidase A (555 aa).

A signal peptide spans M1–T18. The N-linked (GlcNAc...) asparagine glycan is linked to N47. Residue E325 is the Proton donor of the active site. N351, N412, and N460 each carry an N-linked (GlcNAc...) asparagine glycan.

Belongs to the glycosyl hydrolase 20 family. In terms of tissue distribution, expressed in coelomocytes and neurons of the pharyngeal region and nerve cord.

The protein localises to the lysosome. The enzyme catalyses Hydrolysis of terminal non-reducing N-acetyl-D-hexosamine residues in N-acetyl-beta-D-hexosaminides.. Its function is as follows. Responsible for the degradation of GM2 gangliosides, and a variety of other molecules containing terminal N-acetyl hexosamines. Degrades chitotriose. In Caenorhabditis elegans, this protein is Beta-hexosaminidase A (hex-1).